The primary structure comprises 534 residues: Protein FAM83D (534 aa).

Disordered stretches follow at residues 320–372 (TPPS…STLG) and 501–534 (GLNR…RGLQ). Residues 329-342 (TKPQAERLTSTPAR) show a composition bias toward polar residues. Residues 350 to 362 (RMNKDIEEPDRKS) show a composition bias toward basic and acidic residues. A compositionally biased stretch (polar residues) spans 511–520 (EARQPNTNID).

It belongs to the FAM83 family.

It localises to the cytoplasm. It is found in the cytoskeleton. Its subcellular location is the spindle. The protein localises to the spindle pole. In terms of biological role, may regulate cell proliferation, growth, migration and epithelial to mesenchymal transition. May also be important for proper chromosome congression and alignment during mitosis. The sequence is that of Protein FAM83D from Danio rerio (Zebrafish).